We begin with the raw amino-acid sequence, 145 residues long: MKLNDLSPAPGSRREKHRPGRGIGSGLGKTGGRGHKGQTSRSGGTIAPGFEGGQQPLHRRLPKFGFVSLKAMDRAEVRLSELAKVEGDIVTVQSLKDANVINVNVQRVKIMLSGEVARAVTIGKGIGATKGARAAIEAAGGKFEE.

Positions 1-57 are disordered; that stretch reads MKLNDLSPAPGSRREKHRPGRGIGSGLGKTGGRGHKGQTSRSGGTIAPGFEGGQQPL. Residues 21 to 31 are compositionally biased toward gly residues; sequence RGIGSGLGKTG.

The protein belongs to the universal ribosomal protein uL15 family. As to quaternary structure, part of the 50S ribosomal subunit.

In terms of biological role, binds to the 23S rRNA. The protein is Large ribosomal subunit protein uL15 of Pseudomonas fluorescens (strain Pf0-1).